The sequence spans 164 residues: MMKTSAIHFPFQAPNTISLVAGTGDAKNPLNAFDMALLSSGIGNLNLIRISSIMPPKAEIIPLPKIPQGSLVPTAYGYEISKIKGETVAAGISVAIPKDKELCGLIMEYECVGSKKECEDTVREMAKDGFEMRGWEIDEIISIASEQTVENIGCAFAAAALWYK.

Position 52 is a pyruvic acid (Ser) (Ser52).

The protein belongs to the PdaD family. The cofactor is pyruvate.

The enzyme catalyses L-arginine + H(+) = agmatine + CO2. In Methanococcus vannielii (strain ATCC 35089 / DSM 1224 / JCM 13029 / OCM 148 / SB), this protein is Pyruvoyl-dependent arginine decarboxylase.